The primary structure comprises 1226 residues: Methionine synthase (1226 aa).

Positions 7–327 constitute a Hcy-binding domain; that stretch reads KVQIEKQLSE…EHIRQMALVV (321 aa). Zn(2+) is bound by residues C249, C312, and C313. The region spanning 358-619 is the Pterin-binding domain; that stretch reads FINVGERTNV…VPEDLREAVE (262 aa). One can recognise a B12-binding N-terminal domain in the interval 652–746; sequence SALEWRDWPV…FINASKEVGA (95 aa). Residues E696, 758–762, H761, S806, T810, and A862 contribute to the methylcob(III)alamin site; that span reads GDVHD. The B12-binding domain occupies 748–883; it reads NGKILLATVK…SDELKPSFVE (136 aa). The AdoMet activation domain occupies 899–1226; sequence KQPRTKPVTL…AEKWLGPNLN (328 aa). S-adenosyl-L-methionine-binding positions include D949, R1137, and 1192–1193; that span reads YF.

The protein belongs to the vitamin-B12 dependent methionine synthase family. It depends on methylcob(III)alamin as a cofactor. Zn(2+) is required as a cofactor.

It carries out the reaction (6S)-5-methyl-5,6,7,8-tetrahydrofolate + L-homocysteine = (6S)-5,6,7,8-tetrahydrofolate + L-methionine. The protein operates within amino-acid biosynthesis; L-methionine biosynthesis via de novo pathway; L-methionine from L-homocysteine (MetH route): step 1/1. Its function is as follows. Catalyzes the transfer of a methyl group from methyl-cobalamin to homocysteine, yielding enzyme-bound cob(I)alamin and methionine. Subsequently, remethylates the cofactor using methyltetrahydrofolate. The sequence is that of Methionine synthase (metH) from Aliivibrio fischeri (strain ATCC 700601 / ES114) (Vibrio fischeri).